The sequence spans 525 residues: Glutamate--cysteine ligase (525 aa).

It belongs to the glutamate--cysteine ligase type 1 family. Type 1 subfamily.

It catalyses the reaction L-cysteine + L-glutamate + ATP = gamma-L-glutamyl-L-cysteine + ADP + phosphate + H(+). It functions in the pathway sulfur metabolism; glutathione biosynthesis; glutathione from L-cysteine and L-glutamate: step 1/2. The sequence is that of Glutamate--cysteine ligase from Pseudomonas putida (strain W619).